A 431-amino-acid polypeptide reads, in one-letter code: Enolase (431 aa).

Position 167 (glutamine 167) interacts with (2R)-2-phosphoglycerate. The active-site Proton donor is the glutamate 209. Residues aspartate 246, glutamate 289, and aspartate 316 each coordinate Mg(2+). Positions 341, 370, 371, and 392 each coordinate (2R)-2-phosphoglycerate. The active-site Proton acceptor is the lysine 341.

It belongs to the enolase family. Component of the RNA degradosome, a multiprotein complex involved in RNA processing and mRNA degradation. It depends on Mg(2+) as a cofactor.

Its subcellular location is the cytoplasm. It localises to the secreted. The protein resides in the cell surface. It carries out the reaction (2R)-2-phosphoglycerate = phosphoenolpyruvate + H2O. Its pathway is carbohydrate degradation; glycolysis; pyruvate from D-glyceraldehyde 3-phosphate: step 4/5. Functionally, catalyzes the reversible conversion of 2-phosphoglycerate (2-PG) into phosphoenolpyruvate (PEP). It is essential for the degradation of carbohydrates via glycolysis. The protein is Enolase of Shewanella woodyi (strain ATCC 51908 / MS32).